The chain runs to 218 residues: MNSVTVSHAPYTITYHDDWEPVMNQLVEFYNEVASWLLRDETSPIPDKFFIQLKQPLRNKRVCVCGIDPYPKDGTGVPFESPNFTKKSIKEIASSISRLTGVIDYKGYNLNIIDGVIPWNYYLSCKLGETKSHAIYWDKISKLLLHHITKHVSVLYCLGKTDFSNIRAKLESPVTTIVGYHPAARDRQFEKDRSFEIINVLLELDNKAPINWAQGFIY.

Catalysis depends on Asp68, which acts as the Proton acceptor.

The protein belongs to the uracil-DNA glycosylase (UDG) superfamily. UNG family. As to quaternary structure, homodimer. Interacts with protein OPG148. Component of the Uracil-DNA glycosylase(UDG)-OPG148-polymerase complex; OPG148 and UDG form a heterodimeric processivity factor that associates with OPG71 to form the processive polymerase holoenzyme.

It catalyses the reaction Hydrolyzes single-stranded DNA or mismatched double-stranded DNA and polynucleotides, releasing free uracil.. Functionally, plays an essential role in viral replication as a component of the DNA polymerase processivity factor. Excises uracil residues from the DNA which can arise as a result of misincorporation of dUMP residues by DNA polymerase or due to deamination of cytosine. The polypeptide is Uracil-DNA glycosylase (OPG116) (Variola virus).